A 440-amino-acid chain; its full sequence is Glyceraldehyde-3-phosphate dehydrogenase, testis-specific (440 aa).

Residues 1 to 105 (MSRRDVVLTN…PPPPPLQKPA (105 aa)) form a testis-specific N-terminal extension region. Pro residues-rich tracts occupy residues 40–75 (PPKL…PPQI) and 83–102 (APPP…PPLQ). Residues 40 to 106 (PPKLEDPPPT…PPPPLQKPAR (67 aa)) are disordered. Residues 117–118 (RI), D138, K183, Y205, and T225 contribute to the NAD(+) site. D-glyceraldehyde 3-phosphate is bound by residues 255 to 257 (SCT), T286, 315 to 316 (TG), and R338. The active-site Nucleophile is C256. S358 is subject to Phosphoserine. N420 contacts NAD(+).

This sequence belongs to the glyceraldehyde-3-phosphate dehydrogenase family. In terms of assembly, homotetramer. In terms of tissue distribution, testis specific.

It localises to the cytoplasm. It carries out the reaction D-glyceraldehyde 3-phosphate + phosphate + NAD(+) = (2R)-3-phospho-glyceroyl phosphate + NADH + H(+). Its pathway is carbohydrate degradation; glycolysis; pyruvate from D-glyceraldehyde 3-phosphate: step 1/5. Functionally, may play an important role in regulating the switch between different pathways for energy production during spermiogenesis and in the spermatozoon. Required for sperm motility and male fertility. The sequence is that of Glyceraldehyde-3-phosphate dehydrogenase, testis-specific (Gapdhs) from Mus musculus (Mouse).